Reading from the N-terminus, the 290-residue chain is ATP synthase gamma chain (290 aa).

It belongs to the ATPase gamma chain family. In terms of assembly, F-type ATPases have 2 components, CF(1) - the catalytic core - and CF(0) - the membrane proton channel. CF(1) has five subunits: alpha(3), beta(3), gamma(1), delta(1), epsilon(1). CF(0) has three main subunits: a, b and c.

The protein localises to the cell inner membrane. Functionally, produces ATP from ADP in the presence of a proton gradient across the membrane. The gamma chain is believed to be important in regulating ATPase activity and the flow of protons through the CF(0) complex. The sequence is that of ATP synthase gamma chain from Dictyoglomus thermophilum (strain ATCC 35947 / DSM 3960 / H-6-12).